The sequence spans 151 residues: Myosin light polypeptide 6 (151 aa).

The residue at position 2 (Cys-2) is an N-acetylcysteine. One can recognise an EF-hand 1 domain in the interval 7–42 (DQTAEFKEAFQLFDRTGDGKILYSQCGDVMRALGQN). Residue Ser-57 is modified to Phosphoserine. Lys-81 is subject to N6-acetyllysine. One can recognise an EF-hand 2 domain in the interval 84 to 119 (GTYEDYVEGLRVFDKEGNGTVMGAEIRHVLVTLGEK).

Myosin is a hexamer of 2 heavy chains and 4 light chains. Interacts with SPATA6.

Regulatory light chain of myosin. Does not bind calcium. This chain is Myosin light polypeptide 6 (MYL6), found in Bos taurus (Bovine).